A 460-amino-acid polypeptide reads, in one-letter code: Bifunctional protein GlmU (460 aa).

A pyrophosphorylase region spans residues M1–R235. UDP-N-acetyl-alpha-D-glucosamine-binding positions include L9 to G12, K23, Q76, and G81 to T82. D109 serves as a coordination point for Mg(2+). Residues G146, E161, N176, and N233 each coordinate UDP-N-acetyl-alpha-D-glucosamine. N233 provides a ligand contact to Mg(2+). The interval V236–D256 is linker. Positions G257–R460 are N-acetyltransferase. Residues R338 and K356 each coordinate UDP-N-acetyl-alpha-D-glucosamine. H368 (proton acceptor) is an active-site residue. 2 residues coordinate UDP-N-acetyl-alpha-D-glucosamine: Y371 and N382. Acetyl-CoA contacts are provided by residues N391 to Y392 and A428.

This sequence in the N-terminal section; belongs to the N-acetylglucosamine-1-phosphate uridyltransferase family. The protein in the C-terminal section; belongs to the transferase hexapeptide repeat family. As to quaternary structure, homotrimer. Mg(2+) serves as cofactor.

The protein localises to the cytoplasm. The enzyme catalyses alpha-D-glucosamine 1-phosphate + acetyl-CoA = N-acetyl-alpha-D-glucosamine 1-phosphate + CoA + H(+). The catalysed reaction is N-acetyl-alpha-D-glucosamine 1-phosphate + UTP + H(+) = UDP-N-acetyl-alpha-D-glucosamine + diphosphate. It functions in the pathway nucleotide-sugar biosynthesis; UDP-N-acetyl-alpha-D-glucosamine biosynthesis; N-acetyl-alpha-D-glucosamine 1-phosphate from alpha-D-glucosamine 6-phosphate (route II): step 2/2. Its pathway is nucleotide-sugar biosynthesis; UDP-N-acetyl-alpha-D-glucosamine biosynthesis; UDP-N-acetyl-alpha-D-glucosamine from N-acetyl-alpha-D-glucosamine 1-phosphate: step 1/1. The protein operates within bacterial outer membrane biogenesis; LPS lipid A biosynthesis. Functionally, catalyzes the last two sequential reactions in the de novo biosynthetic pathway for UDP-N-acetylglucosamine (UDP-GlcNAc). The C-terminal domain catalyzes the transfer of acetyl group from acetyl coenzyme A to glucosamine-1-phosphate (GlcN-1-P) to produce N-acetylglucosamine-1-phosphate (GlcNAc-1-P), which is converted into UDP-GlcNAc by the transfer of uridine 5-monophosphate (from uridine 5-triphosphate), a reaction catalyzed by the N-terminal domain. The polypeptide is Bifunctional protein GlmU (Bifidobacterium animalis subsp. lactis (strain AD011)).